A 403-amino-acid polypeptide reads, in one-letter code: Microtubule-associated protein tau (403 aa).

A compositionally biased stretch (basic and acidic residues) spans 1-32 (MAEPRQEFDVMEDHAQGDYTLQDHEGDMEPGL). Positions 1–219 (MAEPRQEFDV…GPMPDLKNVK (219 aa)) are disordered. The residue at position 2 (Ala-2) is an N-acetylalanine. Tyr-19 is modified (phosphotyrosine). Residue Lys-33 forms a Glycyl lysine isopeptide (Lys-Gly) (interchain with G-Cter in ubiquitin) linkage. Residues Ser-35 and Ser-50 each carry the phosphoserine modification. The segment covering 50-60 (SETSDAKSTPT) has biased composition (polar residues). Residues Thr-58, Thr-60, and Thr-71 each carry the phosphothreonine modification. Residues 90 to 106 (KGKDGTGPDDKKAKGAD) show a composition bias toward basic and acidic residues. A Phosphothreonine modification is found at Thr-115. Arg-117 is modified (omega-N-methylarginine). Residue Lys-125 is modified to N6,N6-dimethyllysine; alternate. Lys-125 is subject to N6-acetyllysine; alternate. 4 positions are modified to phosphothreonine: Thr-131, Thr-137, Thr-138, and Thr-143. Residues 136–147 (KTTPTPKTSPGT) show a composition bias toward low complexity. Phosphoserine is present on residues Ser-153 and Ser-157. A compositionally biased stretch (low complexity) spans 156–176 (RSGYSSPGSPGTPGSRSRTPS). Tyr-159 carries the phosphotyrosine modification. Residues Ser-160, Ser-161, and Ser-164 each carry the phosphoserine modification. Phosphothreonine occurs at positions 167 and 174. The residue at position 176 (Ser-176) is a Phosphoserine. The residue at position 179 (Thr-179) is a Phosphothreonine. Lys-187 carries the post-translational modification N6-acetyllysine. At Thr-193 the chain carries Phosphothreonine. Phosphoserine is present on residues Ser-197 and Ser-199. Tau/MAP repeat units lie at residues 206–236 (QAAP…GGGK), 237–267 (VQII…GGGS), 268–298 (VQIV…GGGQ), and 299–330 (VEVK…GGGN). A Glycyl lysine isopeptide (Lys-Gly) (interchain with G-Cter in ubiquitin) cross-link involves residue Lys-216. The residue at position 221 (Lys-221) is an N6-acetyllysine; alternate. Position 221 is an N6-methyllysine; alternate (Lys-221). Residue Lys-221 forms a Glycyl lysine isopeptide (Lys-Gly) (interchain with G-Cter in ubiquitin); alternate linkage. Ser-224 is subject to Phosphoserine. A Glycyl lysine isopeptide (Lys-Gly) (interchain with G-Cter in ubiquitin) cross-link involves residue Lys-229. Lys-243 carries the N6-acetyllysine; alternate modification. A Glycyl lysine isopeptide (Lys-Gly) (interchain with G-Cter in ubiquitin); alternate cross-link involves residue Lys-243. Phosphoserine occurs at positions 247 and 251. Lys-252 carries the post-translational modification N6-acetyllysine. Cys-253 and Cys-284 are oxidised to a cystine. Ser-255 carries the phosphoserine modification. Position 260 is an N6-acetyllysine; alternate (Lys-260). Lys-260 participates in a covalent cross-link: Glycyl lysine isopeptide (Lys-Gly) (interchain with G-Cter in ubiquitin); alternate. The residue at position 267 (Ser-267) is a Phosphoserine. Residue Lys-273 is modified to N6,N6-dimethyllysine; alternate. Lys-273, Lys-279, and Lys-283 each carry N6-acetyllysine; alternate. Residues Lys-273, Lys-279, and Lys-283 each participate in a glycyl lysine isopeptide (Lys-Gly) (interchain with G-Cter in ubiquitin); alternate cross-link. Residue Ser-286 is modified to Phosphoserine. 3 positions are modified to N6-acetyllysine; alternate: Lys-293, Lys-305, and Lys-309. Residues Lys-293, Lys-305, and Lys-309 each participate in a glycyl lysine isopeptide (Lys-Gly) (interchain with G-Cter in ubiquitin); alternate cross-link. Omega-N-methylarginine is present on Arg-311. Residue Ser-314 is modified to Phosphoserine. Residue Lys-315 forms a Glycyl lysine isopeptide (Lys-Gly) (interchain with G-Cter in ubiquitin) linkage. A Phosphoserine modification is found at Ser-318. Position 331 is an N6-acetyllysine; alternate (Lys-331). Lys-331 participates in a covalent cross-link: Glycyl lysine isopeptide (Lys-Gly) (interchain with G-Cter in ubiquitin); alternate. A Glycyl lysine isopeptide (Lys-Gly) (interchain with G-Cter in ubiquitin) cross-link involves residue Lys-337. Lys-347 bears the N6-acetyllysine; alternate mark. Lys-347 participates in a covalent cross-link: Glycyl lysine isopeptide (Lys-Gly) (interchain with G-Cter in ubiquitin); alternate. Tyr-356 carries the post-translational modification Phosphotyrosine. 2 positions are modified to phosphoserine: Ser-358 and Ser-362. The disordered stretch occupies residues 360 to 379 (VVSGDTSPRHLSNVSSTGSI). Over residues 363–378 (GDTSPRHLSNVSSTGS) the composition is skewed to polar residues. Position 365 is a phosphothreonine (Thr-365). Ser-366, Ser-371, Ser-378, and Ser-384 each carry phosphoserine. Thr-389 is modified (phosphothreonine).

In terms of assembly, interacts with MARK1, MARK2, MARK3 and MARK4. Interacts with SQSTM1 when polyubiquitinated. Interacts with PSMC2 through SQSTM1. Interacts with FKBP4. Binds to CSNK1D. Interacts with SGK1. Interacts with PIN1. Interacts with LRRK2. Interacts with LRP1, leading to endocytosis; this interaction is reduced in the presence of LRPAP1/RAP. In terms of processing, polyubiquitinated. Requires functional TRAF6 and may provoke SQSTM1-dependent degradation by the proteasome. Post-translationally, phosphorylation at various serine and threonine residues in S-P or T-P motifs by proline-directed protein kinases (PDPK1, CDK1, CDK5, GSK3, MAPK) (a few sites per protein in interphase, more in mitosis), and at serine residues in K-X-G-S motifs by MAP/microtubule affinity-regulating kinase (MARK1, MARK2, MARK3, MARK4), causing detachment from microtubules, and their disassembly. Phosphorylation at Ser-224 by BRSK1 and BRSK2 in neurons affects ability to bind microtubules and plays a role in neuron polarization. Phosphorylated by PHK. Dephosphorylation at several serine and threonine residues by the serine/threonine phosphatase PPP5C. In terms of tissue distribution, expressed in neurons.

The protein localises to the cytoplasm. It localises to the cytosol. Its subcellular location is the cell membrane. It is found in the cytoskeleton. The protein resides in the cell projection. The protein localises to the axon. It localises to the dendrite. Functionally, promotes microtubule assembly and stability, and might be involved in the establishment and maintenance of neuronal polarity. The C-terminus binds axonal microtubules while the N-terminus binds neural plasma membrane components, suggesting that tau functions as a linker protein between both. Axonal polarity is predetermined by tau localization (in the neuronal cell) in the domain of the cell body defined by the centrosome. The short isoforms allow plasticity of the cytoskeleton whereas the longer isoforms may preferentially play a role in its stabilization. This Capra hircus (Goat) protein is Microtubule-associated protein tau (MAPT).